The following is a 94-amino-acid chain: Co-chaperonin GroES (94 aa).

Belongs to the GroES chaperonin family. In terms of assembly, heptamer of 7 subunits arranged in a ring. Interacts with the chaperonin GroEL.

Its subcellular location is the cytoplasm. In terms of biological role, together with the chaperonin GroEL, plays an essential role in assisting protein folding. The GroEL-GroES system forms a nano-cage that allows encapsulation of the non-native substrate proteins and provides a physical environment optimized to promote and accelerate protein folding. GroES binds to the apical surface of the GroEL ring, thereby capping the opening of the GroEL channel. This is Co-chaperonin GroES from Staphylococcus epidermidis (strain ATCC 35984 / DSM 28319 / BCRC 17069 / CCUG 31568 / BM 3577 / RP62A).